Consider the following 569-residue polypeptide: Urease subunit alpha (569 aa).

One can recognise a Urease domain in the interval 131–569 (GGIDTHIHFI…LPLAQRYLLL (439 aa)). Residues histidine 136, histidine 138, and lysine 219 each coordinate Ni(2+). An N6-carboxylysine modification is found at lysine 219. Residue histidine 221 coordinates substrate. Histidine 248 and histidine 274 together coordinate Ni(2+). The Proton donor role is filled by histidine 322. Residue aspartate 362 participates in Ni(2+) binding.

Belongs to the metallo-dependent hydrolases superfamily. Urease alpha subunit family. In terms of assembly, heterotrimer of UreA (gamma), UreB (beta) and UreC (alpha) subunits. Three heterotrimers associate to form the active enzyme. Requires Ni cation as cofactor. In terms of processing, carboxylation allows a single lysine to coordinate two nickel ions.

The protein localises to the cytoplasm. It carries out the reaction urea + 2 H2O + H(+) = hydrogencarbonate + 2 NH4(+). It participates in nitrogen metabolism; urea degradation; CO(2) and NH(3) from urea (urease route): step 1/1. The protein is Urease subunit alpha of Synechococcus sp. (strain CC9311).